Reading from the N-terminus, the 802-residue chain is Phenylalanine--tRNA ligase beta subunit (802 aa).

The 110-residue stretch at 40-149 (RPELDFVKIV…EGAEIGKTIR (110 aa)) folds into the tRNA-binding domain. One can recognise a B5 domain in the interval 407-484 (HKEVRIHTDI…RTRGYDTIQV (78 aa)). The Mg(2+) site is built by D462, D468, E471, and E472. The region spanning 710–802 (SQFPEAEIDI…LAGKNGFVLR (93 aa)) is the FDX-ACB domain.

It belongs to the phenylalanyl-tRNA synthetase beta subunit family. Type 1 subfamily. In terms of assembly, tetramer of two alpha and two beta subunits. Mg(2+) serves as cofactor.

It localises to the cytoplasm. It carries out the reaction tRNA(Phe) + L-phenylalanine + ATP = L-phenylalanyl-tRNA(Phe) + AMP + diphosphate + H(+). This Leptospira borgpetersenii serovar Hardjo-bovis (strain L550) protein is Phenylalanine--tRNA ligase beta subunit.